The chain runs to 619 residues: DNA mismatch repair protein MutL (619 aa).

Positions 368 to 378 (VDEPKQVDEPK) are enriched in basic and acidic residues. The tract at residues 368–403 (VDEPKQVDEPKQSSPVQEPKEEIPSFLPTVESKQND) is disordered.

This sequence belongs to the DNA mismatch repair MutL/HexB family.

In terms of biological role, this protein is involved in the repair of mismatches in DNA. It is required for dam-dependent methyl-directed DNA mismatch repair. May act as a 'molecular matchmaker', a protein that promotes the formation of a stable complex between two or more DNA-binding proteins in an ATP-dependent manner without itself being part of a final effector complex. The protein is DNA mismatch repair protein MutL of Geobacillus sp. (strain WCH70).